We begin with the raw amino-acid sequence, 275 residues long: Small ribosomal subunit protein uS2 (275 aa).

Residues 232–256 (ARATDGKPEPEPVPGQELGADEPLA) are disordered.

Belongs to the universal ribosomal protein uS2 family.

The protein is Small ribosomal subunit protein uS2 of Acidothermus cellulolyticus (strain ATCC 43068 / DSM 8971 / 11B).